The sequence spans 137 residues: MQVKTLLGATFLALSLASCSTVEKVVYRIDVPQGNYLEATTVAQVKEGMTAQQVQYLLGTPVLVDPYNSQTWYYVFLQQRAYETPVQHTFTVKFDQRGIVTETHLDKPLPQVSQQGENNTIIETGEKPKSSWWKFWK.

Residues 1 to 18 (MQVKTLLGATFLALSLAS) form the signal peptide. Cys19 carries N-palmitoyl cysteine lipidation. Cys19 carries the S-diacylglycerol cysteine lipid modification.

Belongs to the BamE family. In terms of assembly, part of the Bam complex.

It localises to the cell outer membrane. Its function is as follows. Part of the outer membrane protein assembly complex, which is involved in assembly and insertion of beta-barrel proteins into the outer membrane. The protein is Outer membrane protein assembly factor BamE of Haemophilus influenzae (strain ATCC 51907 / DSM 11121 / KW20 / Rd).